The primary structure comprises 444 residues: Sonic hedgehog protein (444 aa).

Positions 1-24 (MLVATQSLLLLSFICTLVTPPGLA) are cleaved as a signal peptide. Residue cysteine 25 is the site of N-palmitoyl cysteine attachment. The short motif at 33–39 (KRRHPKK) is the Cardin-Weintraub element. Ca(2+) is bound by residues glutamate 90, glutamate 91, aspartate 96, threonine 126, glutamate 127, aspartate 130, and aspartate 132. Histidine 141, aspartate 148, and histidine 183 together coordinate Zn(2+). Glycine 198 is lipidated: Cholesterol glycine ester. 3 repeat units span residues 386–393 (QVDLQSHH), 394–401 (QVDLQSHH), and 403–409 (VDLQSHH). The tract at residues 386–409 (QVDLQSHHQVDLQSHHQVDLQSHH) is 3 X 8 AA tandem repeats of Q-V-D-L-Q-S-H-H.

This sequence belongs to the hedgehog family. Interacts with HHATL/GUP1 which negatively regulates HHAT-mediated palmitoylation of the SHH N-terminus. Interacts with BOC and CDON. Interacts with HHIP. Interacts with DISP1 via its cholesterol anchor. Interacts with SCUBE2. As to quaternary structure, multimer. Post-translationally, the C-terminal domain displays an autoproteolysis activity and a cholesterol transferase activity. Both activities result in the cleavage of the full-length protein and covalent attachment of a cholesterol moiety to the C-terminal of the newly generated N-terminal fragment (ShhN). Cholesterylation is required for the sonic hedgehog protein N-product targeting to lipid rafts and multimerization. ShhN is the active species in both local and long-range signaling, whereas the C-product (ShhC) is degraded in the reticulum endoplasmic. In terms of processing, N-palmitoylation by HHAT of ShhN is required for sonic hedgehog protein N-product multimerization and full activity. It is a prerequisite for the membrane-proximal positioning and the subsequent shedding of this N-terminal peptide. The lipidated N- and C-terminal peptides of ShhNp can be cleaved (shedding). The N-terminal palmitoylated peptide is cleaved at the Cardin-Weintraub (CW) motif site. The cleavage reduced the interactions with heparan sulfate. The cleavage is enhanced by SCUBE2. As to expression, strongly expressed in notochord and neural floor plate during embryogenesis. In tadpole, high expression is observed in pancreas/stomach, moderate expression in tail, and low expression in intestine, brain, and hind limb.

The protein resides in the endoplasmic reticulum membrane. The protein localises to the golgi apparatus membrane. It is found in the cell membrane. It catalyses the reaction glycyl-L-cysteinyl-[protein] + cholesterol + H(+) = [protein]-C-terminal glycyl cholesterol ester + N-terminal L-cysteinyl-[protein]. Its function is as follows. The C-terminal part of the sonic hedgehog protein precursor displays an autoproteolysis and a cholesterol transferase activity. Both activities result in the cleavage of the full-length protein into two parts (ShhN and ShhC) followed by the covalent attachment of a cholesterol moiety to the C-terminal of the newly generated ShhN. Both activities occur in the endoplasmic reticulum. Once cleaved, ShhC is degraded in the endoplasmic reticulum. The dually lipidated sonic hedgehog protein N-product (ShhNp) is a morphogen which is essential for a variety of patterning events during development. Induces ventral cell fate in the neural tube and somites. Involved in the patterning of the anterior-posterior axis of the developing limb bud. Essential for axon guidance. Binds to the patched (PTCH1) receptor, which functions in association with smoothened (SMO), to activate the transcription of target genes. In the absence of SHH, PTCH1 represses the constitutive signaling activity of SMO. The polypeptide is Sonic hedgehog protein (Xenopus laevis (African clawed frog)).